A 212-amino-acid polypeptide reads, in one-letter code: Large ribosomal subunit protein uL3 (212 aa).

A compositionally biased stretch (basic residues) spans R128–T146. The interval R128 to P164 is disordered.

This sequence belongs to the universal ribosomal protein uL3 family. Part of the 50S ribosomal subunit. Forms a cluster with proteins L14 and L19.

One of the primary rRNA binding proteins, it binds directly near the 3'-end of the 23S rRNA, where it nucleates assembly of the 50S subunit. This chain is Large ribosomal subunit protein uL3, found in Desulfitobacterium hafniense (strain Y51).